Here is a 237-residue protein sequence, read N- to C-terminus: Lectin (237 aa).

2 residues coordinate Mn(2+): Glu-8 and Asp-10. Ca(2+) contacts are provided by Asp-10, Tyr-12, Asn-14, and Asp-19. Residues Tyr-12 and Asn-14 each coordinate a carbohydrate. Residues Asp-19 and His-24 each coordinate Mn(2+). 98 to 100 (GLY) is an a carbohydrate binding site. Asp-208 is a Ca(2+) binding site. A carbohydrate contacts are provided by Gly-227 and Arg-228.

The protein belongs to the leguminous lectin family. Homotetramer; dimer of dimers. Post-translationally, concanavalin A-like lectins of the Diocleinae subtribe undergo proteolytic processing referred to as circular permutation. The propeptide is split into an N-terminal and a C-terminal part, the gamma and beta chain, respectively. These are then religated in beta-gamma order to form the mature alpha chain. The beta and gamma chains can often be detected in cell extracts. Residues 1-118 of the mature chain, as displayed here, probably constitute the beta chain in the propeptide, residues 119-237 the gamma chain.

Its function is as follows. D-mannose/D-glucose-binding lectin with hemagglutinating activity towards rabbit and human erythrocytes. In rats, induces dose-dependent paw edema. Has low cytotoxicity against Artemisia sp. The protein is Lectin of Macropsychanthus comosus (Sea purse).